The primary structure comprises 151 residues: Calcium-binding protein SPEC 2C (151 aa).

EF-hand domains are found at residues 10 to 45 (EQRK…IEIE), 46 to 78 (LTQE…KAEQ), 81 to 116 (GKGA…CTDP), and 118 to 151 (MTKE…QSSY). 18 residues coordinate Ca(2+): aspartate 23, aspartate 25, aspartate 27, lysine 29, glutamate 34, aspartate 59, aspartate 61, serine 63, glutamate 70, aspartate 94, aspartate 96, serine 98, serine 100, glutamate 105, aspartate 131, aspartate 135, glutamate 137, and glutamate 142.

Found in cell lineages giving rise to the aboral ectoderm, a squamous epithelium covering the surface of the late stage embryo and larva.

In terms of biological role, calcium-binding protein involved in larval development and metamorphosis. Likely to function as calcium buffers mediating the transport of calcium from the sea water to the blastocoel where calcium is required for skeleton formation. This chain is Calcium-binding protein SPEC 2C (SPEC2C), found in Strongylocentrotus purpuratus (Purple sea urchin).